The chain runs to 214 residues: Outer-membrane lipoprotein LolB (214 aa).

Positions 1–25 (MNNLKRFTKSIFSCIALSGLLFLGG) are cleaved as a signal peptide. Cys26 carries N-palmitoyl cysteine lipidation. Cys26 carries the S-diacylglycerol cysteine lipid modification.

This sequence belongs to the LolB family. As to quaternary structure, monomer.

The protein localises to the cell outer membrane. Functionally, plays a critical role in the incorporation of lipoproteins in the outer membrane after they are released by the LolA protein. The protein is Outer-membrane lipoprotein LolB of Shewanella oneidensis (strain ATCC 700550 / JCM 31522 / CIP 106686 / LMG 19005 / NCIMB 14063 / MR-1).